The chain runs to 372 residues: 18-hydroxynorfluorocurarine reductase (372 aa).

Zn(2+)-binding residues include Cys47, Asp50, His69, Glu70, Cys100, Cys103, Cys106, Cys114, and Cys172. Residues Gly197–Gly202, Lys226, Leu283–Ala285, Ser307, and Arg354 contribute to the NADP(+) site.

The protein belongs to the zinc-containing alcohol dehydrogenase family. In terms of assembly, homodimer. Zn(2+) serves as cofactor. Mainly expressed in roots.

It catalyses the reaction (19E)-cur-19-en-17-al + NADP(+) = norfluorocurarine + NADPH + H(+). It carries out the reaction 17,18-epoxy-17-hydroxycur-19-ene + NADP(+) = 18-hydroxynorfluorocurarine + NADPH + H(+). It functions in the pathway alkaloid biosynthesis. Alcohol dehydrogenase involved in the biosynthesis of curare monoterpene indole alkaloids (MIAs), natural products such as strychnine, a neurotoxic compound used as a pesticide to control rodents, and its pharmacologically active derivatives, including brucine, used to regulate blood pressure. Curare alkaloids act as animal glycine receptor antagonists. Catalyzes the conversion of norfluorocurarine to desoxy Wieland-Gumlich aldehyde, and of 18-OH norfluorocurarine to Wieland-Gumlich aldehyde. This is 18-hydroxynorfluorocurarine reductase from Strychnos nux-vomica (Poison nut).